We begin with the raw amino-acid sequence, 331 residues long: UPF0194 membrane protein YbhG (331 aa).

A signal peptide spans 1–19 (MKKPVVIGLAIAAIVTVIA). Residues 107–208 (EEIAQAAAAV…LDLQDTTLIA (102 aa)) are a coiled coil.

It belongs to the UPF0194 family.

Its subcellular location is the periplasm. The polypeptide is UPF0194 membrane protein YbhG (Salmonella arizonae (strain ATCC BAA-731 / CDC346-86 / RSK2980)).